Here is a 63-residue protein sequence, read N- to C-terminus: Large ribosomal subunit protein uL29 (63 aa).

The protein belongs to the universal ribosomal protein uL29 family.

The chain is Large ribosomal subunit protein uL29 from Tolumonas auensis (strain DSM 9187 / NBRC 110442 / TA 4).